The sequence spans 1938 residues: Myosin-6 (1938 aa).

The Myosin N-terminal SH3-like domain occupies 31-80 (DIRTECFVPDDKEEYVKAKIVSREGGKVTAETENGKTVTVKEDQVMQQNP). One can recognise a Myosin motor domain in the interval 84–779 (DKIEDMAMLT…LLGLLEEMRD (696 aa)). Lys128 is modified (N6,N6,N6-trimethyllysine). 177-184 (GESGAGKT) is a binding site for ATP. Thr378 is modified (phosphothreonine). Residue Ser416 is modified to Phosphoserine. 2 actin-binding regions span residues 656-678 (LNKL…IPNE) and 758-772 (KFGH…GLLG). The region spanning 782-811 (LSRIITRIQAQARGQLMRIEFKKMVERRDA) is the IQ domain. 2 calmodulin-binding regions span residues 789-806 (IQAQ…KKMV) and 815-832 (IQWN…PWMK). Positions 842 to 1938 (KSAETEKEMA…GAKQKMHDEE (1097 aa)) form a coiled coil. Residues Ser1089 and Ser1138 each carry the phosphoserine modification. Tyr1260 is subject to Phosphotyrosine. Ser1270 carries the phosphoserine modification. Residues Thr1276 and Thr1283 each carry the phosphothreonine modification. At Ser1308 the chain carries Phosphoserine. Tyr1309 is subject to Phosphotyrosine. Thr1310 carries the post-translational modification Phosphothreonine. The residue at position 1511 (Ser1511) is a Phosphoserine. A phosphothreonine mark is found at Thr1514 and Thr1680. The interval 1907–1938 (AEERADIAESQVNKLRAKSRDIGAKQKMHDEE) is disordered. Over residues 1924-1938 (KSRDIGAKQKMHDEE) the composition is skewed to basic and acidic residues.

It belongs to the TRAFAC class myosin-kinesin ATPase superfamily. Myosin family. As to quaternary structure, muscle myosin is a hexameric protein that consists of 2 heavy chain subunits (MHC), 2 alkali light chain subunits (MLC) and 2 regulatory light chain subunits (MLC-2).

It is found in the cytoplasm. The protein localises to the myofibril. Functionally, muscle contraction. The protein is Myosin-6 (Myh6) of Rattus norvegicus (Rat).